The following is a 275-amino-acid chain: NH(3)-dependent NAD(+) synthetase (275 aa).

50 to 57 (GISGGVDS) contributes to the ATP binding site. Asp-56 contributes to the Mg(2+) binding site. Arg-147 is a binding site for deamido-NAD(+). Thr-167 lines the ATP pocket. Glu-172 serves as a coordination point for Mg(2+). 2 residues coordinate deamido-NAD(+): Lys-180 and Asp-187. 2 residues coordinate ATP: Lys-196 and Thr-218. Position 267–268 (267–268 (HK)) interacts with deamido-NAD(+).

It belongs to the NAD synthetase family. As to quaternary structure, homodimer.

It catalyses the reaction deamido-NAD(+) + NH4(+) + ATP = AMP + diphosphate + NAD(+) + H(+). The protein operates within cofactor biosynthesis; NAD(+) biosynthesis; NAD(+) from deamido-NAD(+) (ammonia route): step 1/1. Functionally, catalyzes the ATP-dependent amidation of deamido-NAD to form NAD. Uses ammonia as a nitrogen source. This is NH(3)-dependent NAD(+) synthetase from Pseudomonas syringae pv. syringae (strain B728a).